The following is a 289-amino-acid chain: 4-diphosphocytidyl-2-C-methyl-D-erythritol kinase (289 aa).

Residue K10 is part of the active site. 94–104 (PVAAGLAGGSS) serves as a coordination point for ATP. D136 is a catalytic residue.

The protein belongs to the GHMP kinase family. IspE subfamily.

The enzyme catalyses 4-CDP-2-C-methyl-D-erythritol + ATP = 4-CDP-2-C-methyl-D-erythritol 2-phosphate + ADP + H(+). It functions in the pathway isoprenoid biosynthesis; isopentenyl diphosphate biosynthesis via DXP pathway; isopentenyl diphosphate from 1-deoxy-D-xylulose 5-phosphate: step 3/6. Catalyzes the phosphorylation of the position 2 hydroxy group of 4-diphosphocytidyl-2C-methyl-D-erythritol. This Bacillus mycoides (strain KBAB4) (Bacillus weihenstephanensis) protein is 4-diphosphocytidyl-2-C-methyl-D-erythritol kinase.